A 149-amino-acid chain; its full sequence is UPF0260 protein PSPTO_3918 (149 aa).

It belongs to the UPF0260 family.

The protein is UPF0260 protein PSPTO_3918 of Pseudomonas syringae pv. tomato (strain ATCC BAA-871 / DC3000).